The following is a 136-amino-acid chain: uncharacterized protein (136 aa).

Residues 40–62 traverse the membrane as a helical segment; it reads LFYSISLCVSLLLHISLCVSVYV.

The protein localises to the membrane. This is an uncharacterized protein from Homo sapiens (Human).